A 613-amino-acid chain; its full sequence is Phosphoinositide phospholipase C 6 (613 aa).

The PI-PLC X-box domain occupies 137 to 281 (QDMTAPLSHY…LLHRIIISTK (145 aa)). Catalysis depends on residues histidine 152 and histidine 198. Residues 288–349 (ESRNPIVKQK…ASEDQKPAYK (62 aa)) form a disordered region. Residues 349–465 (KRLITIHAGK…GYVKKPNFLM (117 aa)) enclose the PI-PLC Y-box domain. One can recognise a C2 domain in the interval 466–595 (KKGFHDEVFD…PGIRSVPLYD (130 aa)).

Ca(2+) serves as cofactor. In terms of tissue distribution, expressed in leaves, flowers and siliques, but not in roots.

The protein resides in the cell membrane. It catalyses the reaction a 1,2-diacyl-sn-glycero-3-phospho-(1D-myo-inositol-4,5-bisphosphate) + H2O = 1D-myo-inositol 1,4,5-trisphosphate + a 1,2-diacyl-sn-glycerol + H(+). In terms of biological role, the production of the second messenger molecules diacylglycerol (DAG) and inositol 1,4,5-trisphosphate (IP3) is mediated by activated phosphatidylinositol-specific phospholipase C enzymes. The protein is Phosphoinositide phospholipase C 6 (PLC6) of Arabidopsis thaliana (Mouse-ear cress).